A 306-amino-acid chain; its full sequence is Tyrosine recombinase XerC (306 aa).

Residues 2–81 (AKASAAIEEF…ALRQFYGFLV (80 aa)) enclose the Core-binding (CB) domain. The Tyr recombinase domain occupies 102–283 (PLPKTLSHKE…DAARLVALVN (182 aa)). Residues R146, K170, H235, R238, and H261 contribute to the active site. Y270 functions as the O-(3'-phospho-DNA)-tyrosine intermediate in the catalytic mechanism.

It belongs to the 'phage' integrase family. XerC subfamily. Forms a cyclic heterotetrameric complex composed of two molecules of XerC and two molecules of XerD.

The protein resides in the cytoplasm. Its function is as follows. Site-specific tyrosine recombinase, which acts by catalyzing the cutting and rejoining of the recombining DNA molecules. The XerC-XerD complex is essential to convert dimers of the bacterial chromosome into monomers to permit their segregation at cell division. It also contributes to the segregational stability of plasmids. This Erythrobacter litoralis (strain HTCC2594) protein is Tyrosine recombinase XerC.